A 192-amino-acid polypeptide reads, in one-letter code: MFGRTLNTFTSRNAPLVRNFDKFIVNNTLTSKNIYLSQTNTTNTPLSYSTQAKKPFTITEKRIDELKTPYQPTSPHLTIYKFPLPAVMSIMHRATGICLALGITGLAGVTLFAPHDAIHYIQLLHTQYPALVYPAKFAVALPLTYHFCTGVRHIIWDETVKGLSISQIESSGKVLLAVVAVLSTIFTFVSFK.

The N-terminal 27 residues, 1–27, are a transit peptide targeting the mitochondrion; the sequence is MFGRTLNTFTSRNAPLVRNFDKFIVNN. Residues 48–83 lie on the Mitochondrial matrix side of the membrane; the sequence is YSTQAKKPFTITEKRIDELKTPYQPTSPHLTIYKFP. Residues 84–113 traverse the membrane as a helical segment; the sequence is LPAVMSIMHRATGICLALGITGLAGVTLFA. Residues 114 to 131 lie on the Mitochondrial intermembrane side of the membrane; sequence PHDAIHYIQLLHTQYPAL. A helical transmembrane segment spans residues 132-156; it reads VYPAKFAVALPLTYHFCTGVRHIIW. A heme b-binding site is contributed by His146. At 157 to 164 the chain is on the mitochondrial matrix side; the sequence is DETVKGLS. The chain crosses the membrane as a helical span at residues 165-186; that stretch reads ISQIESSGKVLLAVVAVLSTIF. Residues 187–189 are Mitochondrial intermembrane-facing; it reads TFV.

Belongs to the cytochrome b560 family. As to quaternary structure, component of complex II composed of four subunits: the flavoprotein (FP) sdha, iron-sulfur protein (IP) sdhb, and a cytochrome b560 composed of sdhc and sdhd. The cofactor is heme b.

The protein localises to the mitochondrion inner membrane. It participates in carbohydrate metabolism; tricarboxylic acid cycle. Its function is as follows. Membrane-anchoring subunit of succinate dehydrogenase (SDH) that is involved in complex II of the mitochondrial electron transport chain and is responsible for transferring electrons from succinate to ubiquinone (coenzyme Q). The protein is Succinate dehydrogenase cytochrome b560 subunit, mitochondrial (sdhC) of Dictyostelium discoideum (Social amoeba).